We begin with the raw amino-acid sequence, 59 residues long: Large ribosomal subunit protein bL32 (59 aa).

The segment at 1 to 59 (MAVQQNKKSPSKRGMHRAHDFLTAPVIAIEPSTGEAHRRHHISPNGFYRGRKVVKGKDE) is disordered. Residues 49-59 (RGRKVVKGKDE) are compositionally biased toward basic residues.

Belongs to the bacterial ribosomal protein bL32 family.

The sequence is that of Large ribosomal subunit protein bL32 from Laribacter hongkongensis (strain HLHK9).